The chain runs to 951 residues: Zinc fingers and homeoboxes protein 3 (951 aa).

The tract at residues 1–66 (MASKRKSTTP…SSTDGSALAN (66 aa)) is disordered. The span at 42-58 (PSEAPEASSEAAPNPSS) shows a compositional bias: low complexity. 2 consecutive C2H2-type zinc fingers follow at residues 77–100 (YSCKECDFRSQDVTHFVGHMTSEH) and 109–132 (FVCTGCSFLAKTPEGLSLHNAKCH). The tract at residues 198-249 (KENAPTQPGGEALPKPLAGETEGKEGDHTFINGATPVSQASANSTKPPHTAN) is disordered. Residues 232–244 (TPVSQASANSTKP) are compositionally biased toward polar residues. The segment at 237–481 (ASANSTKPPH…LLTACPSITS (245 aa)) is required for homodimerization and interaction with NFYA. The segment at 297–495 (LSSIPTYNAA…DANIYKNKKS (199 aa)) is required for repressor activity. DNA-binding regions (homeobox) lie at residues 298-357 (SSIP…GISW) and 487-546 (ANIY…RNLK). Residues 490 to 548 (YKNKKSHEQLSALKGSFCRNQFPGQSEVEHLTKVTGLSTREVRKWFSDRRYHCRNLKGT) are required for nuclear localization. A Phosphoserine modification is found at Ser597. A DNA-binding region (homeobox 3) is located at residues 605–664 (TPTKYKERAPEQLRVLESSFAQNPLPPEEELDRLRSETKMTRREIDGWFSERRKRVNAEE). 2 disordered regions span residues 621-642 (ESSFAQNPLPPEEELDRLRSET) and 661-702 (NAEE…NGSS). The segment covering 661 to 674 (NAEETKKADGHAPQ) has biased composition (basic and acidic residues). Positions 675 to 690 (EEAEGAEEEGRDEELA) are enriched in acidic residues. Ser701 and Ser716 each carry phosphoserine. 2 DNA-binding regions (homeobox) span residues 759-818 (PSRV…KNGQ) and 830-889 (FPPG…TRAV). The tract at residues 885-951 (ETRAVADTSS…PQSGRQLETD (67 aa)) is disordered. 2 positions are modified to phosphoserine: Ser922 and Ser941. Polar residues predominate over residues 937 to 951 (FDTSSPQSGRQLETD).

The protein belongs to the ZHX family. As to quaternary structure, homodimer (via homeobox domain 1). Heterodimer with ZHX1 (via homeobox domain 1). Heterodimer with ZHX2 (via homeobox domain 1). Heterodimerization with ZHX1 is a prerequisite for repressor activity. Interacts with NFYA. As to expression, widely expressed.

The protein localises to the cytoplasm. Its subcellular location is the nucleus. Functionally, acts as a transcriptional repressor. Involved in the early stages of mesenchymal stem cell (MSC) osteogenic differentiation. Is a regulator of podocyte gene expression during primary glomerula disease. Binds to promoter DNA. In Rattus norvegicus (Rat), this protein is Zinc fingers and homeoboxes protein 3 (Zhx3).